The chain runs to 94 residues: Small ribosomal subunit protein uS19c (94 aa).

Belongs to the universal ribosomal protein uS19 family.

It localises to the plastid. In terms of biological role, protein S19 forms a complex with S13 that binds strongly to the 16S ribosomal RNA. The chain is Small ribosomal subunit protein uS19c (rps19) from Epifagus virginiana (Beechdrops).